The following is a 507-amino-acid chain: Desmethyl-deoxy-podophyllotoxin synthase (507 aa).

A helical transmembrane segment spans residues 1–21 (MEFLSFPLSSALLIILLFMLV). Residue cysteine 440 participates in heme binding.

Belongs to the cytochrome P450 family. The cofactor is heme. Rhizome-specific expression.

The protein localises to the membrane. The enzyme catalyses (-)-deoxypodophyllotoxin + reduced [NADPH--hemoprotein reductase] + O2 = (-)-4'-desmethyl-deoxypodophyllotoxin + formaldehyde + oxidized [NADPH--hemoprotein reductase] + H2O + H(+). Its pathway is aromatic compound metabolism; phenylpropanoid biosynthesis. Its function is as follows. Cytochrome P450 involved in the biosynthesis of etoposide, a chemotherapeutic compound of the topoisomerase inhibitor family. Catalyzes the conversion of deoxypodophyllotoxin to desmethyl-deoxypodophyllotoxin. The sequence is that of Desmethyl-deoxy-podophyllotoxin synthase from Sinopodophyllum hexandrum (Himalayan may apple).